The chain runs to 102 residues: Small ribosomal subunit protein uS14 (102 aa).

This sequence belongs to the universal ribosomal protein uS14 family. In terms of assembly, part of the 30S ribosomal subunit. Contacts proteins S3 and S10.

In terms of biological role, binds 16S rRNA, required for the assembly of 30S particles and may also be responsible for determining the conformation of the 16S rRNA at the A site. The polypeptide is Small ribosomal subunit protein uS14 (Wolbachia pipientis subsp. Culex pipiens (strain wPip)).